We begin with the raw amino-acid sequence, 262 residues long: Iso-A82775C biosynthesis cluster protein B (262 aa).

Part of the gene cluster that mediates the biosynthesis of iso-A82775C, a enylepoxycyclohexane and biosynthetic precursor of the chloropestolide anticancer natural products. Within the cluster, the prenyltransferase iacE prenylates siccayne to generate pestalodiol E, using dimethylallyl diphosphate (DMAPP) as cosubstrate. The probable oxidoreductase iacF is then involved in the epoxidation of pestalodiol F to pestalodiol F, which is further converted to pestalofone A by the short-chain dehydrogenase/reductase iacG. Iso-A82775C is subsequently generated from pestalofone A by the short-chain dehydrogenase/reductase iacC. Iso-A82775C is further condensed with maldoxin via a Diels-Alder reaction to produce the anticancer natural products chloropestolides A to E. This is Iso-A82775C biosynthesis cluster protein B from Pestalotiopsis fici (strain W106-1 / CGMCC3.15140).